The following is a 241-amino-acid chain: Tetrahydromethanopterin S-methyltransferase subunit A (241 aa).

The Cytoplasmic segment spans residues 1-220 (MAEKKEPAEG…HSGVLAGKIE (220 aa)). A 5-hydroxybenzimidazolylcob(I)amide-binding site is contributed by His85. Residues 221-241 (GIMVGLVLSLFVLGLLLFGGM) traverse the membrane as a helical segment.

This sequence belongs to the MtrA family. The complex is composed of 8 subunits; MtrA, MtrB, MtrC, MtrD, MtrE, MtrF, MtrG and MtrH. 5-hydroxybenzimidazolylcob(I)amide is required as a cofactor.

It localises to the cell membrane. The enzyme catalyses 5-methyl-5,6,7,8-tetrahydromethanopterin + coenzyme M + 2 Na(+)(in) = 5,6,7,8-tetrahydromethanopterin + methyl-coenzyme M + 2 Na(+)(out). It participates in one-carbon metabolism; methanogenesis from CO(2); methyl-coenzyme M from 5,10-methylene-5,6,7,8-tetrahydromethanopterin: step 2/2. In terms of biological role, part of a complex that catalyzes the formation of methyl-coenzyme M and tetrahydromethanopterin from coenzyme M and methyl-tetrahydromethanopterin. This is an energy-conserving, sodium-ion translocating step. This chain is Tetrahydromethanopterin S-methyltransferase subunit A, found in Methanohalobium evestigatum (strain ATCC BAA-1072 / DSM 3721 / NBRC 107634 / OCM 161 / Z-7303).